The following is a 447-amino-acid chain: Phosphoglucosamine mutase (447 aa).

Residue serine 101 is the Phosphoserine intermediate of the active site. Serine 101, aspartate 242, aspartate 244, and aspartate 246 together coordinate Mg(2+). Phosphoserine is present on serine 101.

The protein belongs to the phosphohexose mutase family. Mg(2+) is required as a cofactor. Post-translationally, activated by phosphorylation.

The catalysed reaction is alpha-D-glucosamine 1-phosphate = D-glucosamine 6-phosphate. Its function is as follows. Catalyzes the conversion of glucosamine-6-phosphate to glucosamine-1-phosphate. In Methylobacterium radiotolerans (strain ATCC 27329 / DSM 1819 / JCM 2831 / NBRC 15690 / NCIMB 10815 / 0-1), this protein is Phosphoglucosamine mutase.